Here is a 324-residue protein sequence, read N- to C-terminus: tRNA-dihydrouridine(20a/20b) synthase [NAD(P)+]-like (324 aa).

Residues 33 to 35 and Q87 each bind FMN; that span reads PMV. The active-site Proton donor is C116. FMN is bound by residues K158, H186, 216–218, and 240–241; these read NGD and AR.

The protein belongs to the Dus family. Dus4 subfamily. FMN serves as cofactor.

The enzyme catalyses 5,6-dihydrouridine(20a) in tRNA + NADP(+) = uridine(20a) in tRNA + NADPH + H(+). The catalysed reaction is 5,6-dihydrouridine(20a) in tRNA + NAD(+) = uridine(20a) in tRNA + NADH + H(+). It catalyses the reaction 5,6-dihydrouridine(20b) in tRNA + NAD(+) = uridine(20b) in tRNA + NADH + H(+). It carries out the reaction 5,6-dihydrouridine(20b) in tRNA + NADP(+) = uridine(20b) in tRNA + NADPH + H(+). Functionally, catalyzes the synthesis of dihydrouridine, a modified base found in the D-loop of most tRNAs. This chain is tRNA-dihydrouridine(20a/20b) synthase [NAD(P)+]-like (Dus4l), found in Mus musculus (Mouse).